Consider the following 214-residue polypeptide: Membrane antigen containing repeating peptides (214 aa).

Repeat copies occupy residues 1–14, 15–28, 29–42, and 43–56. A disordered region spans residues 1 to 31; that stretch reads QETSAKLADTEETLQETSAKLADTEETLQET. The tract at residues 1-56 is 4 X 14 AA tandem repeats; that stretch reads QETSAKLADTEETLQETSAKLADTEETLQETSAKLADTEETLQETSAKLADTEETL. Residues 180–214 form a disordered region; that stretch reads CSLHPTPRRLGDVSNRENSIENKTRSASRLSGRLF. Basic and acidic residues predominate over residues 188–203; the sequence is RLGDVSNRENSIENKT.

The protein localises to the membrane. The chain is Membrane antigen containing repeating peptides from Leishmania major.